A 203-amino-acid chain; its full sequence is dITP/XTP pyrophosphatase (203 aa).

7 to 12 (SGNLHK) contributes to the substrate binding site. Mg(2+) contacts are provided by glutamate 47 and aspartate 77. Aspartate 77 serves as the catalytic Proton acceptor. Substrate contacts are provided by residues serine 78, 160 to 163 (FGYD), lysine 183, and 188 to 189 (HR).

The protein belongs to the HAM1 NTPase family. Homodimer. Requires Mg(2+) as cofactor.

The catalysed reaction is XTP + H2O = XMP + diphosphate + H(+). It carries out the reaction dITP + H2O = dIMP + diphosphate + H(+). The enzyme catalyses ITP + H2O = IMP + diphosphate + H(+). Functionally, pyrophosphatase that catalyzes the hydrolysis of nucleoside triphosphates to their monophosphate derivatives, with a high preference for the non-canonical purine nucleotides XTP (xanthosine triphosphate), dITP (deoxyinosine triphosphate) and ITP. Seems to function as a house-cleaning enzyme that removes non-canonical purine nucleotides from the nucleotide pool, thus preventing their incorporation into DNA/RNA and avoiding chromosomal lesions. This is dITP/XTP pyrophosphatase from Opitutus terrae (strain DSM 11246 / JCM 15787 / PB90-1).